Reading from the N-terminus, the 257-residue chain is Outer dense fiber protein 4 (257 aa).

The disordered stretch occupies residues 1–41; sequence MDAEYSGNEFPRSEGERDQHQRPGKERKSGEAGWGTGELGQ. A compositionally biased stretch (basic and acidic residues) spans 11–30; sequence PRSEGERDQHQRPGKERKSG. Residue S64 is modified to Phosphoserine. The next 3 helical transmembrane spans lie at 80–100, 152–172, and 179–199; these read AQVL…VVAF, VTFI…FELE, and IGWS…CAIL.

In terms of tissue distribution, expressed in testis and sperm; especially localized to sperm tail (at protein level).

It localises to the membrane. Component of the outer dense fibers (ODF) of spermatozoa which could be involved in sperm tail structure, sperm movement and general organization of cellular cytoskeleton. The sequence is that of Outer dense fiber protein 4 (ODF4) from Homo sapiens (Human).